We begin with the raw amino-acid sequence, 124 residues long: Small ribosomal subunit protein uS12 (124 aa).

D89 carries the post-translational modification 3-methylthioaspartic acid. Positions 104–124 are disordered; the sequence is TDGVENRKQSRSKYGTKRPKK. The span at 112–124 shows a compositional bias: basic residues; it reads QSRSKYGTKRPKK.

This sequence belongs to the universal ribosomal protein uS12 family. In terms of assembly, part of the 30S ribosomal subunit. Contacts proteins S8 and S17. May interact with IF1 in the 30S initiation complex.

Its function is as follows. With S4 and S5 plays an important role in translational accuracy. Functionally, interacts with and stabilizes bases of the 16S rRNA that are involved in tRNA selection in the A site and with the mRNA backbone. Located at the interface of the 30S and 50S subunits, it traverses the body of the 30S subunit contacting proteins on the other side and probably holding the rRNA structure together. The combined cluster of proteins S8, S12 and S17 appears to hold together the shoulder and platform of the 30S subunit. This chain is Small ribosomal subunit protein uS12, found in Thermosipho melanesiensis (strain DSM 12029 / CIP 104789 / BI429).